The primary structure comprises 236 residues: 2,3,4,5-tetrahydropyridine-2,6-dicarboxylate N-acetyltransferase (236 aa).

The protein belongs to the transferase hexapeptide repeat family. DapH subfamily.

It carries out the reaction (S)-2,3,4,5-tetrahydrodipicolinate + acetyl-CoA + H2O = L-2-acetamido-6-oxoheptanedioate + CoA. Its pathway is amino-acid biosynthesis; L-lysine biosynthesis via DAP pathway; LL-2,6-diaminopimelate from (S)-tetrahydrodipicolinate (acetylase route): step 1/3. Catalyzes the transfer of an acetyl group from acetyl-CoA to tetrahydrodipicolinate. In Oceanobacillus iheyensis (strain DSM 14371 / CIP 107618 / JCM 11309 / KCTC 3954 / HTE831), this protein is 2,3,4,5-tetrahydropyridine-2,6-dicarboxylate N-acetyltransferase.